A 354-amino-acid polypeptide reads, in one-letter code: 3-dehydroquinate synthase (354 aa).

NAD(+) is bound by residues 100-104 (GATGD), 124-125 (TT), lysine 136, lysine 145, and 163-166 (FLKT). 3 residues coordinate Zn(2+): glutamate 178, histidine 242, and histidine 256.

This sequence belongs to the sugar phosphate cyclases superfamily. Dehydroquinate synthase family. NAD(+) serves as cofactor. Co(2+) is required as a cofactor. Requires Zn(2+) as cofactor.

It localises to the cytoplasm. The catalysed reaction is 7-phospho-2-dehydro-3-deoxy-D-arabino-heptonate = 3-dehydroquinate + phosphate. The protein operates within metabolic intermediate biosynthesis; chorismate biosynthesis; chorismate from D-erythrose 4-phosphate and phosphoenolpyruvate: step 2/7. Its function is as follows. Catalyzes the conversion of 3-deoxy-D-arabino-heptulosonate 7-phosphate (DAHP) to dehydroquinate (DHQ). This Staphylococcus aureus (strain Mu50 / ATCC 700699) protein is 3-dehydroquinate synthase.